The chain runs to 312 residues: DNA-directed RNA polymerase subunit alpha (312 aa).

The alpha N-terminal domain (alpha-NTD) stretch occupies residues 1 to 226 (MIEFEKPIIT…EHLNLFTDLT (226 aa)). The tract at residues 243 to 312 (DEKVLDRTIE…DLGLGLKNDK (70 aa)) is alpha C-terminal domain (alpha-CTD).

It belongs to the RNA polymerase alpha chain family. In terms of assembly, homodimer. The RNAP catalytic core consists of 2 alpha, 1 beta, 1 beta' and 1 omega subunit. When a sigma factor is associated with the core the holoenzyme is formed, which can initiate transcription.

It carries out the reaction RNA(n) + a ribonucleoside 5'-triphosphate = RNA(n+1) + diphosphate. Functionally, DNA-dependent RNA polymerase catalyzes the transcription of DNA into RNA using the four ribonucleoside triphosphates as substrates. The chain is DNA-directed RNA polymerase subunit alpha from Streptococcus agalactiae serotype III (strain NEM316).